Consider the following 607-residue polypeptide: Glutamyl-tRNA(Gln) amidotransferase subunit E (607 aa).

Residues 399 to 428 (GVPEETRGANPDGTTRFLRPRPGAARMYPE) form a disordered region.

This sequence belongs to the GatB/GatE family. GatE subfamily. Heterodimer of GatD and GatE.

The enzyme catalyses L-glutamyl-tRNA(Gln) + L-glutamine + ATP + H2O = L-glutaminyl-tRNA(Gln) + L-glutamate + ADP + phosphate + H(+). Its function is as follows. Allows the formation of correctly charged Gln-tRNA(Gln) through the transamidation of misacylated Glu-tRNA(Gln) in organisms which lack glutaminyl-tRNA synthetase. The reaction takes place in the presence of glutamine and ATP through an activated gamma-phospho-Glu-tRNA(Gln). The GatDE system is specific for glutamate and does not act on aspartate. The polypeptide is Glutamyl-tRNA(Gln) amidotransferase subunit E (Pyrobaculum neutrophilum (strain DSM 2338 / JCM 9278 / NBRC 100436 / V24Sta) (Thermoproteus neutrophilus)).